The sequence spans 902 residues: MSQSKEDKIRSILEAKNIKSNFQNKENLSEFNEKKASKRAEDLLDVYYNTLSTADMEFPYWYNREYRKSDGDIPVVRRAKALKAAFSHMTPNIIPGEKIVMQKTRHYRGSFPMPWVSESFFVAQGEQMREEAKKLASNTADELTKFGSGGGNVTESFGNVVSIAGKFGMRKEEVPVLVKMAKEWVGKSVEDLGFHYEKMMPDYDLKENLMSTLICMFDSGYTLPQGREVINYFYPLNYGLDGIIEMAKECKKAVAGNASGDGLIGMDRLYFYEAVIQVIEGLQTWILNYAKHAKYLESIETDLEAKKEYSDLVEILEHIAHKQPRTFREALQLTYTIHIASVNEDAISGMSIGRFGQILYPWYEQDIEKGLITKEEVIELLELYRIKITCIDCFASAGVNGGVLSGNTFNTLSIGGLKEDGSTGANELEELLLEASMRCRTPQPSLTMLYDEKLPEDFLMKAAECTKLGSGYPAWVNNSNGTTFMMKQFADEGMTVEEARAFALGGCLETSPGCWKQLTLNGKTYSIAGGAGQSAGSGVHFIANPKILELVLMNGKDYRMNIQVFEPHNKPLDTYEEVIEVFKDYYKQAINVLERANNIELDIWRKFDTSIINSLLKPDCLDKGQHIGNMGYRYNATLNVETCGTVTMVNSFAALKKLVYDDKAFTIEEMKDAILNNFGFKDALEVGNYSMADQVKVDKTGKYDAIYKACLDAPKYGNNDLYADNILKNYEVWLSKVCEEAQSLYAKKMYPCQISVSTHGPQGAATLATPDGRLSGTTYSDGSVSAYAGTDKNGVYALFESATIWDQAVVQNSQMNLKLHPTTIKGQQGTKKLLDLTRSYLRKGGFHIQYNVVDSETLKDAQKNPDNYRQLMVRVAGFTQYWCELGKPIQDEVIARTEYEGV.

The 737-residue stretch at 38–774 (KRAEDLLDVY…ATLATPDGRL (737 aa)) folds into the PFL domain. 4-hydroxyphenylacetate contacts are provided by S348 and C507. The Cysteine radical intermediate role is filled by C507. The active-site Proton donor is E509. The 4-hydroxyphenylacetate site is built by H540 and E641. Positions 782–902 (GSVSAYAGTD…VIARTEYEGV (121 aa)) constitute a Glycine radical domain. The residue at position 877 (G877) is a Glycine radical.

This sequence belongs to the glycyl radical enzyme (GRE) family. HPAD subfamily. As to quaternary structure, heterooctamer consisting of 4 large (HpdB) subunits and 4 small (HpdC) subunits, arranged as a tetramer of heterodimers. Also forms a catalytically inactive homodimer. In terms of processing, requires the activating protein CsdA to generate the key active site glycyl radical that is involved in catalysis. Phosphorylated on serine. Phosphorylation may trigger the formation of the active heterooctamers and thereby regulates enzyme activity.

It carries out the reaction 4-hydroxyphenylacetate + H(+) = 4-methylphenol + CO2. The enzyme catalyses 3,4-dihydroxyphenylacetate + H(+) = 4-methylcatechol + CO2. Functionally, glycyl radical subunit of the HPA decarboxylase that decarboxylates phenylacetates with a hydroxyl group in the p-position. Active toward 4-hydroxyphenylacetate and 3,4-dihydroxyphenylacetate, forming 4-methylphenol and 4-methylcatechol, respectively. Is likely involved in the catabolism of aromatic amino acids such as tyrosine fermentation. 4-methylphenol (p-cresol) formation provides metabolic toxicity, which allows an active suppression of other microbes and may provide growth advantages for the producers in highly competitive environments. The large subunit is the catalytic subunit that binds the substrate. This is 4-hydroxyphenylacetate decarboxylase glycyl radical subunit from Clostridioides difficile (strain 630) (Peptoclostridium difficile).